Here is a 201-residue protein sequence, read N- to C-terminus: Probable GTP-binding protein EngB (201 aa).

The EngB-type G domain occupies 22-195 (SLPEIAFCGR…MEQLEMILKY (174 aa)). GTP contacts are provided by residues 30-37 (GRSNVGKS), 57-61 (GKTRT), 75-78 (DLPG), 142-145 (TKLD), and 174-176 (YSS). Mg(2+) is bound by residues serine 37 and threonine 59.

The protein belongs to the TRAFAC class TrmE-Era-EngA-EngB-Septin-like GTPase superfamily. EngB GTPase family. Mg(2+) is required as a cofactor.

Functionally, necessary for normal cell division and for the maintenance of normal septation. The sequence is that of Probable GTP-binding protein EngB from Finegoldia magna (strain ATCC 29328 / DSM 20472 / WAL 2508) (Peptostreptococcus magnus).